Consider the following 318-residue polypeptide: Ubiquinol oxidase, mitochondrial (318 aa).

The transit peptide at 1-46 (MTVMRGLLNGGRYGNRYIWTAISLRHPEVMEGNGLESAVMQWRRML) directs the protein to the mitochondrion. The chain crosses the membrane as a helical span at residues 143–163 (AMMLETVAAVPGMVGGMLLHL). Fe cation-binding residues include Glu147, Glu186, and His189. The chain crosses the membrane as a helical span at residues 205–225 (LLVLAVQGVFFNSFFVLYVLS). The Fe cation site is built by Glu237, Glu288, and His291.

Belongs to the alternative oxidase family. As to quaternary structure, homodimer; disulfide-linked. Fe cation serves as cofactor.

It localises to the mitochondrion inner membrane. The enzyme catalyses 2 a ubiquinol + O2 = 2 a ubiquinone + 2 H2O. Catalyzes the cyanide-resistant oxidation of ubiquinol and the reduction of molecular oxygen to water, but does not translocate protons and consequently is not linked to oxidative phosphorylation. May increase respiration when the cytochrome respiratory pathway is restricted, or in response to low temperatures. This is Ubiquinol oxidase, mitochondrial (AOMI 1) from Mangifera indica (Mango).